A 623-amino-acid polypeptide reads, in one-letter code: uncharacterized protein (623 aa).

Positions 256–351 (AEEKLLSKNK…EEIHGLKKKN (96 aa)) form a coiled coil. Disordered stretches follow at residues 417 to 485 (NRRN…SPSS) and 497 to 536 (ALSS…ECAT). The segment covering 422 to 431 (LESVPFNTLS) has biased composition (polar residues). Basic and acidic residues predominate over residues 452 to 481 (ELKKPAESYGDETKKPNQHNKDGSIDEKPK).

This is an uncharacterized protein from Arabidopsis thaliana (Mouse-ear cress).